The primary structure comprises 215 residues: Ion-translocating oxidoreductase complex subunit G (215 aa).

A helical transmembrane segment spans residues 9 to 29 (GLLLSGFALICTAAVALVNEA). Thr-176 is subject to FMN phosphoryl threonine.

The protein belongs to the RnfG family. As to quaternary structure, the complex is composed of six subunits: RnfA, RnfB, RnfC, RnfD, RnfE and RnfG. FMN serves as cofactor.

It localises to the cell inner membrane. Part of a membrane-bound complex that couples electron transfer with translocation of ions across the membrane. This is Ion-translocating oxidoreductase complex subunit G from Shewanella amazonensis (strain ATCC BAA-1098 / SB2B).